The sequence spans 281 residues: Pantothenate synthetase (281 aa).

Residue M30–H37 coordinates ATP. The active-site Proton donor is the H37. Position 61 (Q61) interacts with (R)-pantoate. Q61 serves as a coordination point for beta-alanine. An ATP-binding site is contributed by G147–D150. (R)-pantoate is bound at residue Q153. Residues I176 and K184–R187 each bind ATP.

The protein belongs to the pantothenate synthetase family. Homodimer.

The protein resides in the cytoplasm. It catalyses the reaction (R)-pantoate + beta-alanine + ATP = (R)-pantothenate + AMP + diphosphate + H(+). Its pathway is cofactor biosynthesis; (R)-pantothenate biosynthesis; (R)-pantothenate from (R)-pantoate and beta-alanine: step 1/1. Functionally, catalyzes the condensation of pantoate with beta-alanine in an ATP-dependent reaction via a pantoyl-adenylate intermediate. This is Pantothenate synthetase from Clostridium botulinum (strain Loch Maree / Type A3).